Consider the following 115-residue polypeptide: NADH-ubiquinone oxidoreductase chain 3 (115 aa).

The next 3 membrane-spanning stretches (helical) occupy residues 4–24 (IMAM…AFWL), 55–75 (FFLV…LLPL), and 84–104 (MFLT…GLAY).

It belongs to the complex I subunit 3 family. As to quaternary structure, core subunit of respiratory chain NADH dehydrogenase (Complex I) which is composed of 45 different subunits. Interacts with TMEM186. Interacts with TMEM242.

Its subcellular location is the mitochondrion inner membrane. The enzyme catalyses a ubiquinone + NADH + 5 H(+)(in) = a ubiquinol + NAD(+) + 4 H(+)(out). In terms of biological role, core subunit of the mitochondrial membrane respiratory chain NADH dehydrogenase (Complex I) which catalyzes electron transfer from NADH through the respiratory chain, using ubiquinone as an electron acceptor. Essential for the catalytic activity of complex I. This is NADH-ubiquinone oxidoreductase chain 3 from Phyllotis darwinii (Darwin's leaf-eared mouse).